Here is a 132-residue protein sequence, read N- to C-terminus: Small ribosomal subunit protein uS8 (132 aa).

This sequence belongs to the universal ribosomal protein uS8 family. In terms of assembly, part of the 30S ribosomal subunit. Contacts proteins S5 and S12.

In terms of biological role, one of the primary rRNA binding proteins, it binds directly to 16S rRNA central domain where it helps coordinate assembly of the platform of the 30S subunit. The chain is Small ribosomal subunit protein uS8 from Anaeromyxobacter dehalogenans (strain 2CP-C).